Here is a 238-residue protein sequence, read N- to C-terminus: Beta-glucanase (238 aa).

The N-terminal stretch at 1–26 is a signal peptide; it reads MMKKKSWFTLMITGVISLFFSVSAFA. Residues 29-238 form the GH16 domain; sequence VFWEPLSYFN…EYDWVKYTSN (210 aa). C56 and C85 form a disulfide bridge. E129 acts as the Nucleophile in catalysis. Residue E133 is the Proton donor of the active site.

It belongs to the glycosyl hydrolase 16 family.

The enzyme catalyses Hydrolysis of (1-&gt;4)-beta-D-glucosidic linkages in beta-D-glucans containing (1-&gt;3)- and (1-&gt;4)-bonds.. This is Beta-glucanase (gluB) from Paenibacillus polymyxa (Bacillus polymyxa).